The following is a 372-amino-acid chain: Aminomethyltransferase (372 aa).

This sequence belongs to the GcvT family. In terms of assembly, the glycine cleavage system is composed of four proteins: P, T, L and H.

The enzyme catalyses N(6)-[(R)-S(8)-aminomethyldihydrolipoyl]-L-lysyl-[protein] + (6S)-5,6,7,8-tetrahydrofolate = N(6)-[(R)-dihydrolipoyl]-L-lysyl-[protein] + (6R)-5,10-methylene-5,6,7,8-tetrahydrofolate + NH4(+). In terms of biological role, the glycine cleavage system catalyzes the degradation of glycine. This Streptomyces avermitilis (strain ATCC 31267 / DSM 46492 / JCM 5070 / NBRC 14893 / NCIMB 12804 / NRRL 8165 / MA-4680) protein is Aminomethyltransferase.